Here is a 306-residue protein sequence, read N- to C-terminus: Methionyl-tRNA formyltransferase (306 aa).

110-113 is a (6S)-5,6,7,8-tetrahydrofolate binding site; it reads SLLP.

This sequence belongs to the Fmt family.

It catalyses the reaction L-methionyl-tRNA(fMet) + (6R)-10-formyltetrahydrofolate = N-formyl-L-methionyl-tRNA(fMet) + (6S)-5,6,7,8-tetrahydrofolate + H(+). In terms of biological role, attaches a formyl group to the free amino group of methionyl-tRNA(fMet). The formyl group appears to play a dual role in the initiator identity of N-formylmethionyl-tRNA by promoting its recognition by IF2 and preventing the misappropriation of this tRNA by the elongation apparatus. This Brucella abortus (strain S19) protein is Methionyl-tRNA formyltransferase.